We begin with the raw amino-acid sequence, 192 residues long: Glycerol-3-phosphate acyltransferase (192 aa).

A run of 5 helical transmembrane segments spans residues 1-21 (MTSA…GVLL), 51-71 (LGAV…VLAV), 78-98 (PTVH…PVWL), 112-132 (VLLV…VAVF), and 155-175 (LTAR…LMLW).

It belongs to the PlsY family. As to quaternary structure, probably interacts with PlsX.

It localises to the cell inner membrane. It carries out the reaction an acyl phosphate + sn-glycerol 3-phosphate = a 1-acyl-sn-glycero-3-phosphate + phosphate. Its pathway is lipid metabolism; phospholipid metabolism. Functionally, catalyzes the transfer of an acyl group from acyl-phosphate (acyl-PO(4)) to glycerol-3-phosphate (G3P) to form lysophosphatidic acid (LPA). This enzyme utilizes acyl-phosphate as fatty acyl donor, but not acyl-CoA or acyl-ACP. This Myxococcus xanthus (strain DK1622) protein is Glycerol-3-phosphate acyltransferase.